Reading from the N-terminus, the 662-residue chain is Acetyl-coenzyme A synthetase (662 aa).

CoA-binding positions include 197 to 200 (RKGK) and Thr-317. ATP contacts are provided by residues 393–395 (GEP), 417–422 (DTWWQT), Asp-510, and Arg-525. Ser-533 serves as a coordination point for CoA. Residue Arg-536 participates in ATP binding. His-549 and Val-552 together coordinate Mg(2+). At Lys-623 the chain carries N6-acetyllysine.

This sequence belongs to the ATP-dependent AMP-binding enzyme family. Requires Mg(2+) as cofactor. In terms of processing, acetylated. Deacetylation by the SIR2-homolog deacetylase activates the enzyme.

The enzyme catalyses acetate + ATP + CoA = acetyl-CoA + AMP + diphosphate. In terms of biological role, catalyzes the conversion of acetate into acetyl-CoA (AcCoA), an essential intermediate at the junction of anabolic and catabolic pathways. AcsA undergoes a two-step reaction. In the first half reaction, AcsA combines acetate with ATP to form acetyl-adenylate (AcAMP) intermediate. In the second half reaction, it can then transfer the acetyl group from AcAMP to the sulfhydryl group of CoA, forming the product AcCoA. This chain is Acetyl-coenzyme A synthetase, found in Helicobacter pylori (strain HPAG1).